The chain runs to 141 residues: Lutropin subunit beta (141 aa).

Residues 1 to 20 form the signal peptide; it reads MERLQGLLLWLLLSPSVVWA. Disulfide bonds link C29–C77, C43–C92, C54–C108, C58–C110, and C113–C120. N-linked (GlcNAc...) asparagine glycosylation occurs at N33.

Belongs to the glycoprotein hormones subunit beta family. Heterodimer of a common alpha chain and a unique beta chain which confers biological specificity to thyrotropin, lutropin, follitropin and gonadotropin.

The protein resides in the secreted. Promotes spermatogenesis and ovulation by stimulating the testes and ovaries to synthesize steroids. The polypeptide is Lutropin subunit beta (Lhb) (Mus musculus (Mouse)).